The following is a 225-amino-acid chain: Nuclear protein UL4 homolog (225 aa).

It belongs to the alphaherpesvirinae HHV-1 UL4 family.

It is found in the host nucleus. This chain is Nuclear protein UL4 homolog, found in Equus caballus (Horse).